The chain runs to 375 residues: Alcohol dehydrogenase 1 (375 aa).

Ser-2 bears the N-acetylserine mark. Zn(2+) contacts are provided by Cys-47, His-68, Cys-98, Cys-101, Cys-104, Cys-112, and Cys-175. NAD(+) is bound by residues 200 to 205, Asp-224, and Lys-229; that span reads GLGGVG. Position 234 is an N6-succinyllysine (Lys-234). 293–295 is a binding site for NAD(+); the sequence is VGV. The residue at position 340 (Lys-340) is an N6-succinyllysine. Arg-370 provides a ligand contact to NAD(+).

Belongs to the zinc-containing alcohol dehydrogenase family. Class-I subfamily. Zn(2+) serves as cofactor.

It is found in the cytoplasm. The catalysed reaction is a primary alcohol + NAD(+) = an aldehyde + NADH + H(+). It catalyses the reaction a secondary alcohol + NAD(+) = a ketone + NADH + H(+). This chain is Alcohol dehydrogenase 1 (ADH1), found in Peromyscus maniculatus (North American deer mouse).